The sequence spans 115 residues: NADH-ubiquinone oxidoreductase chain 3 (115 aa).

3 helical membrane-spanning segments follow: residues Phe-3–Trp-23, Phe-55–Leu-75, and Leu-84–Tyr-104.

Belongs to the complex I subunit 3 family. Core subunit of respiratory chain NADH dehydrogenase (Complex I) which is composed of 45 different subunits. Interacts with TMEM186. Interacts with TMEM242.

The protein localises to the mitochondrion inner membrane. It carries out the reaction a ubiquinone + NADH + 5 H(+)(in) = a ubiquinol + NAD(+) + 4 H(+)(out). Its function is as follows. Core subunit of the mitochondrial membrane respiratory chain NADH dehydrogenase (Complex I) which catalyzes electron transfer from NADH through the respiratory chain, using ubiquinone as an electron acceptor. Essential for the catalytic activity of complex I. The chain is NADH-ubiquinone oxidoreductase chain 3 from Gorilla gorilla gorilla (Western lowland gorilla).